Reading from the N-terminus, the 285-residue chain is Nucleotide-binding protein CD630_34000 (285 aa).

8 to 15 (GLSGSGKS) contacts ATP. Residue 59–62 (DIRG) participates in GTP binding.

The protein belongs to the RapZ-like family.

Displays ATPase and GTPase activities. In Clostridioides difficile (strain 630) (Peptoclostridium difficile), this protein is Nucleotide-binding protein CD630_34000.